The chain runs to 321 residues: Zinc finger protein 524 (321 aa).

Polar residues-rich tracts occupy residues 1-14 and 39-48; these read MDNP…STLS and ATTSNRTLKS. 2 disordered regions span residues 1–80 and 86–105; these read MDNP…DLLL and VPYT…SGSK. Residues 49–59 constitute a DNA-binding region (a.T hook); that stretch reads SLPRKRGRPPR. 4 C2H2-type zinc fingers span residues 109-131, 137-159, 165-187, and 193-216; these read HFCP…SISH, HVCK…CNIH, FRCV…HRIH, and YQCP…KRKH. A disordered region spans residues 248–321; it reads GVQEESPEGK…PGAIGHPPVD (74 aa). Positions 262-271 are enriched in polar residues; sequence PISSTTSPLS. Residues 274 to 285 are compositionally biased toward gly residues; the sequence is TAGGSAGAGRGQ.

It belongs to the krueppel C2H2-type zinc-finger protein family.

The protein resides in the nucleus. May be involved in transcriptional regulation. This is Zinc finger protein 524 (Znf524) from Mus musculus (Mouse).